The primary structure comprises 560 residues: Synaptotagmin-5 (560 aa).

Residues 2–22 (GFIVGVVIGLLVGIAIIIGFV) traverse the membrane as a helical segment. Residues 67–249 (ERQKLTWLNH…WPVRKVIPII (183 aa)) enclose the SMP-LTD domain. The segment at 227–523 (EETIRDAVED…YIGRCILTLT (297 aa)) is phospholipid binding. C2 domains lie at 243-364 (RKVI…DVWL) and 417-535 (TTDE…KDWY). 9 residues coordinate Ca(2+): Asp-278, Asp-284, Asp-334, Glu-336, Asp-451, Asp-457, Asp-506, Asp-508, and Asp-513.

The protein belongs to the synaptotagmin family. Ca(2+) is required as a cofactor.

It localises to the membrane. Functionally, may be involved in membrane trafficking. This chain is Synaptotagmin-5 (SYT5), found in Arabidopsis thaliana (Mouse-ear cress).